The primary structure comprises 70 residues: Turripeptide Pal9.2 (70 aa).

Positions M1–G20 are cleaved as a signal peptide. In terms of domain architecture, Kazal-like spans Q21–C70. 3 cysteine pairs are disulfide-bonded: C26–C56, C30–C49, and C38–C70.

The protein belongs to the conopeptide P-like superfamily. Expressed by the venom duct.

The protein localises to the secreted. Acts as a neurotoxin by inhibiting an ion channel. May also act as a serine protease inhibitor, since it possess the kazal serine protease inhibitor signature. The polypeptide is Turripeptide Pal9.2 (Polystira albida (White giant-turris)).